The primary structure comprises 683 residues: Synaptic vesicle glycoprotein 2B (683 aa).

Residues 1-42 (MDDYKYQDNYGGYAPSDGYYRGNESNPEEDAQSDVTEGHDEE) are disordered. At 1–108 (MDDYKYQDNY…MDECGHGRFQ (108 aa)) the chain is on the cytoplasmic side. S33 is subject to Phosphoserine. A Phosphothreonine modification is found at T36. The helical transmembrane segment at 109–129 (WILFFVLGLALMADGVEVFVV) threads the bilayer. Over 130-148 (SFALPSAEKDMCLSSSKKG) the chain is Extracellular. A helical transmembrane segment spans residues 149–169 (MLGMIVYLGMMAGAFILGGLA). The Cytoplasmic portion of the chain corresponds to 170–182 (DKLGRKRVLSMSL). The helical transmembrane segment at 183–203 (AVNASFASLSSFVQGYGAFLF) threads the bilayer. Residues 204–205 (CR) are Extracellular-facing. The chain crosses the membrane as a helical span at residues 206 to 226 (LISGIGIGGALPIVFAYFSEF). Residues 227 to 237 (LSREKRGEHLS) lie on the Cytoplasmic side of the membrane. The chain crosses the membrane as a helical span at residues 238 to 258 (WLGIFWMTGGLYASAMAWSII). Over 259–277 (PHYGWGFSMGTNYHFHSWR) the chain is Extracellular. The helical transmembrane segment at 278–298 (VFVIVCALPCTVSMVALKFMP) threads the bilayer. The Cytoplasmic segment spans residues 299–390 (ESPRFLLEMG…CVMGPYRMNT (92 aa)). Residues 391–411 (LILAVVWFAMAFSYYGLTVWF) form a helical membrane-spanning segment. Over 412–535 (PDMIRYFQDE…CHMDLEQDND (124 aa)) the chain is Extracellular. Y423 bears the Phosphotyrosine mark. N-linked (GlcNAc...) asparagine glycans are attached at residues N441, N491, and N516. A helical transmembrane segment spans residues 536-556 (FLIYLVSFLGSLSVLPGNIIS). Over 557–565 (ALLMDRIGR) the chain is Cytoplasmic. Residues 566-586 (LKMIGGSMLISAVCCFFLFFG) form a helical membrane-spanning segment. Residues 587–592 (NSESAM) lie on the Extracellular side of the membrane. A helical membrane pass occupies residues 593 to 613 (IGWQCLFCGTSIAAWNALDVI). Residues 614-626 (TVELYPTNQRATA) are Cytoplasmic-facing. The chain crosses the membrane as a helical span at residues 627–649 (FGILNGLCKFGAILGNTIFASFV). Topologically, residues 650–653 (GITK) are extracellular. Residues 654 to 672 (VVPILLAAASLVGGGLIAL) form a helical membrane-spanning segment. Over 673–683 (RLPETREQVLM) the chain is Cytoplasmic.

The protein belongs to the major facilitator superfamily. As to quaternary structure, interacts with SYT1 in a calcium-independent manner. Forms a complex with SYT1, syntaxin-1 and SNAP25. (Microbial infection) Interacts with C.botulinum neurotoxin type A2 (BoNT/A, botA). Interaction is improved by glycosylation of SV2. N-glycosylated. Post-translationally, the N-terminal cytoplasmic domain is phosphorylated by CK1.

It is found in the cytoplasmic vesicle. It localises to the secretory vesicle. The protein resides in the synaptic vesicle membrane. Its subcellular location is the acrosome. Its function is as follows. Probably plays a role in the control of regulated secretion in neural and endocrine cells. Functionally, (Microbial infection) Receptor for the C.botulinum neurotoxin type A2 (BoNT/A, botA); glycosylation is not essential but enhances the interaction. Probably also serves as a receptor for the closely related C.botulinum neurotoxin type A1. This Homo sapiens (Human) protein is Synaptic vesicle glycoprotein 2B (SV2B).